A 284-amino-acid chain; its full sequence is Shikimate dehydrogenase (NADP(+)) (284 aa).

Shikimate is bound by residues 20–22 and Ser-67; that span reads SIS. The active-site Proton acceptor is the Lys-71. Residue Asp-83 participates in NADP(+) binding. Shikimate is bound by residues Asn-92 and Asp-107. NADP(+) contacts are provided by residues 129 to 133 and Ile-227; that span reads GAGGA. Residue Tyr-229 participates in shikimate binding. NADP(+) is bound at residue Gly-250.

This sequence belongs to the shikimate dehydrogenase family. In terms of assembly, homodimer.

It catalyses the reaction shikimate + NADP(+) = 3-dehydroshikimate + NADPH + H(+). Its pathway is metabolic intermediate biosynthesis; chorismate biosynthesis; chorismate from D-erythrose 4-phosphate and phosphoenolpyruvate: step 4/7. Its function is as follows. Involved in the biosynthesis of the chorismate, which leads to the biosynthesis of aromatic amino acids. Catalyzes the reversible NADPH linked reduction of 3-dehydroshikimate (DHSA) to yield shikimate (SA). The polypeptide is Shikimate dehydrogenase (NADP(+)) (Streptococcus pneumoniae (strain CGSP14)).